A 69-amino-acid polypeptide reads, in one-letter code: Cytochrome c oxidase subunit 8A, mitochondrial (69 aa).

The transit peptide at 1-25 directs the protein to the mitochondrion; that stretch reads MSVLTSLLLRGLTGSARRLPVPRAK. Residues 2 to 19 carry the SIFI-degron motif; that stretch reads SVLTSLLLRGLTGSARRL. The Mitochondrial matrix segment spans residues 26–36; sequence VHSMPPEEELG. The helical transmembrane segment at 37 to 60 threads the bilayer; that stretch reads TLEKAIALTSCFVSLFLPAGWILS. Over 61-69 the chain is Mitochondrial intermembrane; that stretch reads HLEDYKRPE.

It belongs to the cytochrome c oxidase VIII family. In terms of assembly, component of the cytochrome c oxidase (complex IV, CIV), a multisubunit enzyme composed of 14 subunits. The complex is composed of a catalytic core of 3 subunits MT-CO1, MT-CO2 and MT-CO3, encoded in the mitochondrial DNA, and 11 supernumerary subunits COX4I, COX5A, COX5B, COX6A, COX6B, COX6C, COX7A, COX7B, COX7C, COX8 and NDUFA4, which are encoded in the nuclear genome. The complex exists as a monomer or a dimer and forms supercomplexes (SCs) in the inner mitochondrial membrane with NADH-ubiquinone oxidoreductase (complex I, CI) and ubiquinol-cytochrome c oxidoreductase (cytochrome b-c1 complex, complex III, CIII), resulting in different assemblies (supercomplex SCI(1)III(2)IV(1) and megacomplex MCI(2)III(2)IV(2)). In response to mitochondrial stress, the precursor protein is ubiquitinated by the SIFI complex in the cytoplasm before mitochondrial import, leading to its degradation. Within the SIFI complex, UBR4 initiates ubiquitin chain that are further elongated or branched by KCMF1.

It is found in the mitochondrion inner membrane. It functions in the pathway energy metabolism; oxidative phosphorylation. Functionally, component of the cytochrome c oxidase, the last enzyme in the mitochondrial electron transport chain which drives oxidative phosphorylation. The respiratory chain contains 3 multisubunit complexes succinate dehydrogenase (complex II, CII), ubiquinol-cytochrome c oxidoreductase (cytochrome b-c1 complex, complex III, CIII) and cytochrome c oxidase (complex IV, CIV), that cooperate to transfer electrons derived from NADH and succinate to molecular oxygen, creating an electrochemical gradient over the inner membrane that drives transmembrane transport and the ATP synthase. Cytochrome c oxidase is the component of the respiratory chain that catalyzes the reduction of oxygen to water. Electrons originating from reduced cytochrome c in the intermembrane space (IMS) are transferred via the dinuclear copper A center (CU(A)) of subunit 2 and heme A of subunit 1 to the active site in subunit 1, a binuclear center (BNC) formed by heme A3 and copper B (CU(B)). The BNC reduces molecular oxygen to 2 water molecules using 4 electrons from cytochrome c in the IMS and 4 protons from the mitochondrial matrix. In Papio anubis (Olive baboon), this protein is Cytochrome c oxidase subunit 8A, mitochondrial (COX8A).